A 280-amino-acid chain; its full sequence is MKVILAKRAGFCFGVKRATQMAFEAAGKDQKTFTLGPIIHSPQVVNKLEEMGVGVVKDLSGVSNGTVIIRSHGVLASEMDEAHQKQLEVVDATCPFVKKAQEHVQYLSEAGYDVLVVGDADHPEVQGIVSYGKEKVYVVASGDQVKQLPKMGKMGVVAQTTQSFDNLKSVVTECLRRGGEVRVYNTICDATAVRQQEATELAQQVDCMIVIGGFNSANTRRLAEICTEIQPRTYHIETAAEIDCSWFQGVDTVGVTAGASTPKWIIDEVMNRLDQVNNSH.

Residue cysteine 12 coordinates [4Fe-4S] cluster. Positions 40 and 72 each coordinate (2E)-4-hydroxy-3-methylbut-2-enyl diphosphate. Dimethylallyl diphosphate contacts are provided by histidine 40 and histidine 72. Isopentenyl diphosphate-binding residues include histidine 40 and histidine 72. Cysteine 94 is a binding site for [4Fe-4S] cluster. A (2E)-4-hydroxy-3-methylbut-2-enyl diphosphate-binding site is contributed by histidine 122. Position 122 (histidine 122) interacts with dimethylallyl diphosphate. Isopentenyl diphosphate is bound at residue histidine 122. Glutamate 124 serves as the catalytic Proton donor. Threonine 160 is a (2E)-4-hydroxy-3-methylbut-2-enyl diphosphate binding site. Cysteine 188 contributes to the [4Fe-4S] cluster binding site. Serine 216, asparagine 218, and serine 260 together coordinate (2E)-4-hydroxy-3-methylbut-2-enyl diphosphate. Dimethylallyl diphosphate contacts are provided by serine 216, asparagine 218, and serine 260. Residues serine 216, asparagine 218, and serine 260 each coordinate isopentenyl diphosphate.

Belongs to the IspH family. [4Fe-4S] cluster is required as a cofactor.

It catalyses the reaction isopentenyl diphosphate + 2 oxidized [2Fe-2S]-[ferredoxin] + H2O = (2E)-4-hydroxy-3-methylbut-2-enyl diphosphate + 2 reduced [2Fe-2S]-[ferredoxin] + 2 H(+). The enzyme catalyses dimethylallyl diphosphate + 2 oxidized [2Fe-2S]-[ferredoxin] + H2O = (2E)-4-hydroxy-3-methylbut-2-enyl diphosphate + 2 reduced [2Fe-2S]-[ferredoxin] + 2 H(+). Its pathway is isoprenoid biosynthesis; dimethylallyl diphosphate biosynthesis; dimethylallyl diphosphate from (2E)-4-hydroxy-3-methylbutenyl diphosphate: step 1/1. It functions in the pathway isoprenoid biosynthesis; isopentenyl diphosphate biosynthesis via DXP pathway; isopentenyl diphosphate from 1-deoxy-D-xylulose 5-phosphate: step 6/6. Functionally, catalyzes the conversion of 1-hydroxy-2-methyl-2-(E)-butenyl 4-diphosphate (HMBPP) into a mixture of isopentenyl diphosphate (IPP) and dimethylallyl diphosphate (DMAPP). Acts in the terminal step of the DOXP/MEP pathway for isoprenoid precursor biosynthesis. This is 4-hydroxy-3-methylbut-2-enyl diphosphate reductase from Trichlorobacter lovleyi (strain ATCC BAA-1151 / DSM 17278 / SZ) (Geobacter lovleyi).